A 60-amino-acid polypeptide reads, in one-letter code: Large ribosomal subunit protein uL30 (60 aa).

Belongs to the universal ribosomal protein uL30 family. As to quaternary structure, part of the 50S ribosomal subunit.

The polypeptide is Large ribosomal subunit protein uL30 (Histophilus somni (strain 2336) (Haemophilus somnus)).